Reading from the N-terminus, the 156-residue chain is MSWSKVKYFFFDTPEEKEAAQYSYEKEQTDMKKQQDPPEQQDVTFPKAQTKQNVVSIETAKQSSKVVLLEPRTYSEAQGIADHLKGRRAVVINLQRMSTDQAVRIVDFLSGTVYAIGGDIQKIGPKTFMCTPENVDIVGAISELFGEEEDTNIKRW.

The span at 23 to 36 (SYEKEQTDMKKQQD) shows a compositional bias: basic and acidic residues. Residues 23 to 48 (SYEKEQTDMKKQQDPPEQQDVTFPKA) form a disordered region. Polar residues predominate over residues 37 to 48 (PPEQQDVTFPKA).

This sequence belongs to the SepF family. As to quaternary structure, homodimer. Interacts with FtsZ.

The protein localises to the cytoplasm. Its function is as follows. Cell division protein that is part of the divisome complex and is recruited early to the Z-ring. Probably stimulates Z-ring formation, perhaps through the cross-linking of FtsZ protofilaments. Its function overlaps with FtsA. This chain is Cell division protein SepF, found in Bacillus cereus (strain ATCC 10987 / NRS 248).